A 169-amino-acid chain; its full sequence is Keratin-associated protein 9-7 (169 aa).

17 consecutive repeat copies span residues 8-12 (CCQPT), 13-17 (CCRTT), 32-36 (CCQPS), 37-41 (CCVSS), 46-50 (CCHPT), 51-55 (CCQNT), 56-60 (CCRTT), 61-65 (CCQPT), 75-79 (CCSTP), 80-84 (CCQPI), 85-89 (CCGSS), 90-94 (CCGQT), 100-104 (CCQPS), 139-143 (CCRPA), 144-148 (CCETT), 149-153 (CCRTT), and 163-167 (CCQPA). The segment at 8-167 (CCQPTCCRTT…TCVTSCCQPA (160 aa)) is 17 X 5 AA repeats of C-C-[VGSREQH]-[SQTPN]-[STPAI].

It belongs to the KRTAP type 9 family. Interacts with hair keratins.

Its function is as follows. In the hair cortex, hair keratin intermediate filaments are embedded in an interfilamentous matrix, consisting of hair keratin-associated proteins (KRTAP), which are essential for the formation of a rigid and resistant hair shaft through their extensive disulfide bond cross-linking with abundant cysteine residues of hair keratins. The matrix proteins include the high-sulfur and high-glycine-tyrosine keratins. This Homo sapiens (Human) protein is Keratin-associated protein 9-7.